Here is a 336-residue protein sequence, read N- to C-terminus: Aldo-keto reductase str7 (336 aa).

D57 is an NADP(+) binding site. Y62 (proton donor) is an active-site residue. H124 is a binding site for substrate. Residues 154–155, Q174, 206–220, and 283–291 contribute to the NADP(+) site; these read SE, SPLG…YKSP, and KKIKYLEEN.

The protein belongs to the aldo/keto reductase family. Aldo/keto reductase 2 subfamily.

Its pathway is mycotoxin biosynthesis. Its function is as follows. Aldo-keto reductase; part of the gene cluster that mediates the biosynthesis of strobilurin A, an antifungal polyketide that contains a key beta-methoxyacrylate toxophore that targets the complex III of the mitochondrial electron transport chain. Strobilurin biosynthesis begins with construction of benzoyl CoA by step-wise elimination of ammonia from phenylalanine by the phenylalanine ammonia-lyase str11, oxygenation by str8 and retro-Claisen reaction to form benzoic acid, which is activated to its CoA thiolester benzoyl CoA by the dedicated CoA ligase str10. Benzoyl CoA forms the starter unit for the highly reducing polyketide synthase stpks1 that produces the polyketide prestrobilutin A. The FAD-dependent oxygenase str9 then catalyzes the key oxidative rearrangement responsible for the creation of the beta-methoxyacrylate toxophore. Str9 performs epoxidation of the 2,3 olefin of prestrobilutin A, followed by Meinwald rearrangement to furnish the aldehyde intermediate. Rapid enolization of the aldehyde intermediate would give the beta-methoxyacrylate skeleton and methylations catalyzed by str2 and str3 complete the synthesis and lead to the production of strobilurin A. The short-chain dehydrogenase stl2 and the dehydrogenase str4 play a role in the shunt pathway leading to the production of bolineol. The cluster encodes no obvious halogenase gene that could be involved in production of strobilurin B, nor any obvious dimethylallyl-transferase that could be involved in the production of strobilurin G. It is possible that unknown proteins encoded in, or near, the cluster (such as str1 or stl1) may form new classes of halogenases or dimethylally-transferases, or that the responsible genes are located elsewhere on the genome. Similarly, proteins encoded by str5/str6 hydrolases appear to have no chemical role in the biosynthesis of strobilurin A. Finally, no obvious self-resistance gene is found within the cluster. The polypeptide is Aldo-keto reductase str7 (Strobilurus tenacellus).